A 247-amino-acid chain; its full sequence is Carboxy-S-adenosyl-L-methionine synthase (247 aa).

Residues Tyr39, 64–66, 89–90, 117–118, Asn132, and Arg199 contribute to the S-adenosyl-L-methionine site; these read GCS, DN, and DI.

Belongs to the class I-like SAM-binding methyltransferase superfamily. Cx-SAM synthase family. As to quaternary structure, homodimer.

It catalyses the reaction prephenate + S-adenosyl-L-methionine = carboxy-S-adenosyl-L-methionine + 3-phenylpyruvate + H2O. Its function is as follows. Catalyzes the conversion of S-adenosyl-L-methionine (SAM) to carboxy-S-adenosyl-L-methionine (Cx-SAM). This Shigella sonnei (strain Ss046) protein is Carboxy-S-adenosyl-L-methionine synthase.